The chain runs to 357 residues: DNA replication and repair protein RecF (357 aa).

30–37 (GANGSGKT) serves as a coordination point for ATP.

It belongs to the RecF family.

The protein localises to the cytoplasm. Functionally, the RecF protein is involved in DNA metabolism; it is required for DNA replication and normal SOS inducibility. RecF binds preferentially to single-stranded, linear DNA. It also seems to bind ATP. In Salmonella arizonae (strain ATCC BAA-731 / CDC346-86 / RSK2980), this protein is DNA replication and repair protein RecF.